A 322-amino-acid chain; its full sequence is Hapalindole dimethylallyltransferase (322 aa).

8 residues coordinate dimethylallyl diphosphate: arginine 46, arginine 60, lysine 115, asparagine 166, tyrosine 168, arginine 221, tyrosine 225, and lysine 275.

The protein belongs to the aromatic prenyltransferase family.

It catalyses the reaction hapalindole G + dimethylallyl diphosphate = ambiguine A + diphosphate. It carries out the reaction hapalindole U + dimethylallyl diphosphate + H(+) = ambiguine H + diphosphate. Activity is slightly increased in the presence of Mg(2+). Functionally, prenyltransferase involved in the biosynthesis of ambiguines, a family of hapalindole-type alkaloids. Catalyzes the reverse prenylation of hapalindole G or U at the C2 position with dimethylallyl diphosphate (DMAPP) to generate ambiguine A or H, respectively. In addition, accepts hapalindole A, an epimer of hapalindole G, and catalyzes normal prenylation at its C2 position. The protein is Hapalindole dimethylallyltransferase of Fischerella ambigua (strain UTEX 1903).